Here is a 393-residue protein sequence, read N- to C-terminus: Aspartate aminotransferase (393 aa).

Positions 38, 124, and 174 each coordinate L-aspartate. An N6-(pyridoxal phosphate)lysine modification is found at lysine 237.

This sequence belongs to the class-I pyridoxal-phosphate-dependent aminotransferase family. In terms of assembly, homodimer. The cofactor is pyridoxal 5'-phosphate.

The protein localises to the cytoplasm. It catalyses the reaction L-aspartate + 2-oxoglutarate = oxaloacetate + L-glutamate. The protein is Aspartate aminotransferase (aspB) of Bacillus subtilis (strain 168).